A 100-amino-acid chain; its full sequence is Large ribosomal subunit protein bL21 (100 aa).

It belongs to the bacterial ribosomal protein bL21 family. As to quaternary structure, part of the 50S ribosomal subunit. Contacts protein L20.

This protein binds to 23S rRNA in the presence of protein L20. The chain is Large ribosomal subunit protein bL21 from Rhodospirillum rubrum (strain ATCC 11170 / ATH 1.1.1 / DSM 467 / LMG 4362 / NCIMB 8255 / S1).